The chain runs to 464 residues: MSSGHIVQIIGAVIDVEFPRDSVPSVYDALLLEGGETTLEVQQQLGDGIVRTIAMGSTEGLKRGLKAENTGKPISVPVGTQTLGRIMDVLGRPIDEQGDIGEEERWAIHRKAPGYADQAASADLLETGIKVIDLICPFAKGGKVGLFGGAGVGKTVNMMELINNIAKEHSGLSVFAGVGERTREGNDFYYEMKESNVLDKVAMVYGQMNEPPGNRLRVALTGLTMAEKFRDEGRDVLLFVDNIYRYTLAGTEVSALLGRMPSAVGYQPTLAEEMGQLQERITSTKTGSITSIQAVYVPADDLTDPSPATTFSHLDATVVLSRDIASKGIYPAIDPLDSTSRQLDPLVIGEQHYNVARGVQNVLQRYKELKDIIAILGMDELSEDDKLIVSRARKIERFLSQPFHVAEVFTGSPGKYVSLKETIASFEGILNGDYDDMPEQAFYMCGGIEEAIEKAKAMKEKEGK.

ATP is bound at residue 148–155; the sequence is GGAGVGKT.

Belongs to the ATPase alpha/beta chains family. In terms of assembly, F-type ATPases have 2 components, CF(1) - the catalytic core - and CF(0) - the membrane proton channel. CF(1) has five subunits: alpha(3), beta(3), gamma(1), delta(1), epsilon(1). CF(0) has three main subunits: a(1), b(2) and c(9-12). The alpha and beta chains form an alternating ring which encloses part of the gamma chain. CF(1) is attached to CF(0) by a central stalk formed by the gamma and epsilon chains, while a peripheral stalk is formed by the delta and b chains.

The protein localises to the cell inner membrane. The enzyme catalyses ATP + H2O + 4 H(+)(in) = ADP + phosphate + 5 H(+)(out). Functionally, produces ATP from ADP in the presence of a proton gradient across the membrane. The catalytic sites are hosted primarily by the beta subunits. This Marinobacter nauticus (strain ATCC 700491 / DSM 11845 / VT8) (Marinobacter aquaeolei) protein is ATP synthase subunit beta.